A 260-amino-acid chain; its full sequence is tRNA pseudouridine synthase A (260 aa).

Aspartate 52 (nucleophile) is an active-site residue. Substrate is bound at residue tyrosine 110.

The protein belongs to the tRNA pseudouridine synthase TruA family. In terms of assembly, homodimer.

It carries out the reaction uridine(38/39/40) in tRNA = pseudouridine(38/39/40) in tRNA. Functionally, formation of pseudouridine at positions 38, 39 and 40 in the anticodon stem and loop of transfer RNAs. This Spiroplasma kunkelii protein is tRNA pseudouridine synthase A.